A 736-amino-acid chain; its full sequence is Putative ATP-dependent RNA helicase CG14443 (736 aa).

Disordered stretches follow at residues 32–58, 73–166, 183–237, and 265–296; these read TKSS…SSVL, GIEG…GERP, NSFK…NSWR, and SFTR…NTWK. 2 stretches are compositionally biased toward low complexity: residues 34–58 and 125–160; these read SSIW…SSVL and SSES…SHGS. Basic and acidic residues predominate over residues 190–199; it reads TSRENKESRS. Over residues 277 to 296 the composition is skewed to polar residues; the sequence is LCYQDQSKNPSRPSNYNTWK. A Q motif motif is present at residues 330–358; the sequence is LSFERSGFNATILQQLEDQGYDGPTPIQA. Residues 361–534 enclose the Helicase ATP-binding domain; the sequence is WSIAKEGKNI…NKFLGQYTAI (174 aa). Residue 374 to 381 coordinates ATP; that stretch reads SGKGTGKT. The short motif at 482 to 485 is the DEAD box element; sequence DNID. The 159-residue stretch at 561 to 719 folds into the Helicase C-terminal domain; sequence KVERLMKELT…LLQLAEEKMF (159 aa).

This sequence belongs to the DEAD box helicase family.

The catalysed reaction is ATP + H2O = ADP + phosphate + H(+). In terms of biological role, probable ATP-binding RNA helicase. The sequence is that of Putative ATP-dependent RNA helicase CG14443 from Drosophila melanogaster (Fruit fly).